A 1030-amino-acid chain; its full sequence is FACT complex subunit spt-16 (1030 aa).

Residues 424–445 (RLKSNVIKFKEEQENREAEKDN) are a coiled coil. Basic and acidic residues-rich tracts occupy residues 435 to 449 (EQEN…DQKK) and 464 to 477 (TRNK…RKER). Disordered stretches follow at residues 435 to 477 (EQEN…RKER) and 491 to 514 (ARLS…SYKT). Residues 623–645 (RLIKEMQKRFKTEEAEEREKEGA) are a coiled coil. A disordered region spans residues 927 to 1030 (VESDNEEAMD…KSGPSHKRRK (104 aa)). Acidic residues-rich tracts occupy residues 929 to 951 (SDNE…EEDA) and 958 to 983 (ESDE…DSDE). Residues 987-1007 (KDWSDLEEEAANADKRREVEE) are a coiled coil. Positions 998–1014 (NADKRREVEEPSRDRDR) are enriched in basic and acidic residues. The span at 1015 to 1030 (KRPHSSKSGPSHKRRK) shows a compositional bias: basic residues.

Belongs to the peptidase M24 family. SPT16 subfamily. Component of the FACT complex, a stable heterodimer of spt-16 and hmg-3 or hmg-4. As to expression, expressed in the germline and somatic cells.

The protein resides in the nucleus. The protein localises to the chromosome. Functionally, component of the FACT complex, a general chromatin factor that acts to reorganize nucleosomes. The FACT complex is involved in multiple processes that require DNA as a template such as mRNA elongation, DNA replication and DNA repair. During transcription elongation the FACT complex acts as a histone chaperone that both destabilizes and restores nucleosomal structure. It facilitates the passage of RNA polymerase II and transcription by promoting the dissociation of one histone H2A-H2B dimer from the nucleosome, then subsequently promotes the reestablishment of the nucleosome following the passage of RNA polymerase II. In embryos, promotes cell cycle progression and chromosomal segregation. Plays a role in the development of the anterior pharynx during embryonic development. The sequence is that of FACT complex subunit spt-16 from Caenorhabditis elegans.